A 294-amino-acid chain; its full sequence is UDP-3-O-acyl-N-acetylglucosamine deacetylase (294 aa).

Positions 75, 232, and 236 each coordinate Zn(2+). His259 (proton donor) is an active-site residue.

The protein belongs to the LpxC family. Zn(2+) is required as a cofactor.

It catalyses the reaction a UDP-3-O-[(3R)-3-hydroxyacyl]-N-acetyl-alpha-D-glucosamine + H2O = a UDP-3-O-[(3R)-3-hydroxyacyl]-alpha-D-glucosamine + acetate. It participates in glycolipid biosynthesis; lipid IV(A) biosynthesis; lipid IV(A) from (3R)-3-hydroxytetradecanoyl-[acyl-carrier-protein] and UDP-N-acetyl-alpha-D-glucosamine: step 2/6. Functionally, catalyzes the hydrolysis of UDP-3-O-myristoyl-N-acetylglucosamine to form UDP-3-O-myristoylglucosamine and acetate, the committed step in lipid A biosynthesis. The protein is UDP-3-O-acyl-N-acetylglucosamine deacetylase of Sulfurovum sp. (strain NBC37-1).